Consider the following 262-residue polypeptide: Oxidoreductase GME11367 (262 aa).

Belongs to the avfA family.

It participates in secondary metabolite biosynthesis. Its function is as follows. Oxidoreductase; part of the gene cluster that mediates the biosynthesis of dibenzodioxocinones such as pestalotiollide B, a novel class of inhibitors against cholesterol ester transfer protein (CEPT). The biosynthesis initiates from condensation of acetate and malonate units catalyzed by the non-reducing PKS pks8/GME11356. Pks8/GME11356 lacks a thioesterase (TE) domain, which is important to the cyclizing of the third ring of atrochrysone carboxylic acid, and the esterase GME11355 might play the role of TE and catalyzes the cyclization reaction of the C ring. The lactamase-like protein GME11357 (or other beta-lactamases in Pestalotiopsis microspora) probably hydrolyzes the thioester bond between the ACP of pks8/GME11356 and the intermediate to release atrochrysone carboxylic acid, which is spontaneously dehydrates to form endocrocin anthrone. Endocrocin anthrone is further converted to emodin via the endocrocin intermediate. Emodin is then oxidized by several enzymes such as the Baeyer-Villiger oxidase GME11358, the oxidoreductase GME11367, the short chain dehydrogenase/reductase GME11373, as well as by other oxidoreductases from the cluster, to modify the A and C rings and open the B ring, and finally yield monodictyphenone. The prenyltransferase GME11375 may catalyze the addition reaction between the C5 side chains and the carbon bone of dibenzodioxocinones. The remaining biochemical reactions to the final product dibenzodioxocinones should be methylation catalyzed by methyltransferase GME11366 and reduction and lactonization reaction catalyzed by a series of oxidordeuctases. The chain is Oxidoreductase GME11367 from Pestalotiopsis microspora.